A 324-amino-acid chain; its full sequence is Ribose-phosphate pyrophosphokinase 1 (324 aa).

ATP contacts are provided by residues 39–41 (DGE) and 98–99 (RQ). Mg(2+) contacts are provided by His-132 and Asp-174. Lys-197 is a catalytic residue. Residues Arg-199, Asp-223, and 227–231 (DTAGT) each bind D-ribose 5-phosphate.

Belongs to the ribose-phosphate pyrophosphokinase family. Class I subfamily. As to quaternary structure, homohexamer. Mg(2+) is required as a cofactor.

The protein localises to the cytoplasm. It carries out the reaction D-ribose 5-phosphate + ATP = 5-phospho-alpha-D-ribose 1-diphosphate + AMP + H(+). It functions in the pathway metabolic intermediate biosynthesis; 5-phospho-alpha-D-ribose 1-diphosphate biosynthesis; 5-phospho-alpha-D-ribose 1-diphosphate from D-ribose 5-phosphate (route I): step 1/1. Its function is as follows. Involved in the biosynthesis of the central metabolite phospho-alpha-D-ribosyl-1-pyrophosphate (PRPP) via the transfer of pyrophosphoryl group from ATP to 1-hydroxyl of ribose-5-phosphate (Rib-5-P). The chain is Ribose-phosphate pyrophosphokinase 1 from Lactococcus lactis subsp. lactis (strain IL1403) (Streptococcus lactis).